The following is a 237-amino-acid chain: Probable 2-phosphosulfolactate phosphatase (237 aa).

This sequence belongs to the ComB family. Mg(2+) serves as cofactor.

It carries out the reaction (2R)-O-phospho-3-sulfolactate + H2O = (2R)-3-sulfolactate + phosphate. This is Probable 2-phosphosulfolactate phosphatase from Thermus thermophilus (strain ATCC 27634 / DSM 579 / HB8).